Consider the following 177-residue polypeptide: Dual-action ribosomal maturation protein DarP (177 aa).

This sequence belongs to the DarP family.

The protein localises to the cytoplasm. Its function is as follows. Member of a network of 50S ribosomal subunit biogenesis factors which assembles along the 30S-50S interface, preventing incorrect 23S rRNA structures from forming. Promotes peptidyl transferase center (PTC) maturation. The sequence is that of Dual-action ribosomal maturation protein DarP from Glaesserella parasuis serovar 5 (strain SH0165) (Haemophilus parasuis).